Consider the following 169-residue polypeptide: NADH-quinone oxidoreductase subunit B (169 aa).

[4Fe-4S] cluster is bound by residues cysteine 42, cysteine 43, cysteine 107, and cysteine 136.

Belongs to the complex I 20 kDa subunit family. As to quaternary structure, NDH-1 is composed of 14 different subunits. Subunits NuoB, C, D, E, F, and G constitute the peripheral sector of the complex. The cofactor is [4Fe-4S] cluster.

It localises to the cell inner membrane. It carries out the reaction a quinone + NADH + 5 H(+)(in) = a quinol + NAD(+) + 4 H(+)(out). Functionally, NDH-1 shuttles electrons from NADH, via FMN and iron-sulfur (Fe-S) centers, to quinones in the respiratory chain. The immediate electron acceptor for the enzyme in this species is believed to be ubiquinone. Couples the redox reaction to proton translocation (for every two electrons transferred, four hydrogen ions are translocated across the cytoplasmic membrane), and thus conserves the redox energy in a proton gradient. This is NADH-quinone oxidoreductase subunit B from Helicobacter hepaticus (strain ATCC 51449 / 3B1).